A 351-amino-acid chain; its full sequence is Photosystem II D2 protein (351 aa).

Residues 39–59 (CSYLALGAWFTGTTFVTSWYT) form a helical membrane-spanning segment. H116 is a binding site for chlorophyll a. Residues 123–139 (GFCLRQFEIARLVGLRP) traverse the membrane as a helical segment. The pheophytin a site is built by Q128 and N141. A helical transmembrane segment spans residues 151 to 164 (VFVSVFLLYPLGQA). Position 196 (H196) interacts with chlorophyll a. A helical transmembrane segment spans residues 206–226 (GALLCAIHGATVQNTLFEDGE). A plastoquinone-binding residues include H213 and F260. Residue H213 coordinates Fe cation. H267 contacts Fe cation. A helical membrane pass occupies residues 277–293 (GLWASSIGIVGLALNLR).

Belongs to the reaction center PufL/M/PsbA/D family. In terms of assembly, PSII is composed of 1 copy each of membrane proteins PsbA, PsbB, PsbC, PsbD, PsbE, PsbF, PsbH, PsbI, PsbJ, PsbK, PsbL, PsbM, PsbT, PsbX, PsbY, PsbZ, Psb30/Ycf12, at least 3 peripheral proteins of the oxygen-evolving complex and a large number of cofactors. It forms dimeric complexes. It depends on The D1/D2 heterodimer binds P680, chlorophylls that are the primary electron donor of PSII, and subsequent electron acceptors. It shares a non-heme iron and each subunit binds pheophytin, quinone, additional chlorophylls, carotenoids and lipids. There is also a Cl(-1) ion associated with D1 and D2, which is required for oxygen evolution. The PSII complex binds additional chlorophylls, carotenoids and specific lipids. as a cofactor.

It is found in the plastid. The protein localises to the chloroplast thylakoid membrane. It carries out the reaction 2 a plastoquinone + 4 hnu + 2 H2O = 2 a plastoquinol + O2. Photosystem II (PSII) is a light-driven water:plastoquinone oxidoreductase that uses light energy to abstract electrons from H(2)O, generating O(2) and a proton gradient subsequently used for ATP formation. It consists of a core antenna complex that captures photons, and an electron transfer chain that converts photonic excitation into a charge separation. The D1/D2 (PsbA/PsbD) reaction center heterodimer binds P680, the primary electron donor of PSII as well as several subsequent electron acceptors. D2 is needed for assembly of a stable PSII complex. The sequence is that of Photosystem II D2 protein from Cyanidioschyzon merolae (strain NIES-3377 / 10D) (Unicellular red alga).